The primary structure comprises 399 residues: DNA primase DnaG (399 aa).

The Toprim domain maps to 182–268; it reads DAIIVVEGRA…EVEDLTQKEI (87 aa). Positions 188, 230, and 232 each coordinate Mg(2+).

It belongs to the archaeal DnaG primase family. As to quaternary structure, forms a ternary complex with MCM helicase and DNA. Component of the archaeal exosome complex. Requires Mg(2+) as cofactor.

The catalysed reaction is ssDNA + n NTP = ssDNA/pppN(pN)n-1 hybrid + (n-1) diphosphate.. RNA polymerase that catalyzes the synthesis of short RNA molecules used as primers for DNA polymerase during DNA replication. Also part of the exosome, which is a complex involved in RNA degradation. Acts as a poly(A)-binding protein that enhances the interaction between heteromeric, adenine-rich transcripts and the exosome. This is DNA primase DnaG from Archaeoglobus fulgidus (strain ATCC 49558 / DSM 4304 / JCM 9628 / NBRC 100126 / VC-16).